The chain runs to 180 residues: Large ribosomal subunit protein uL5 (180 aa).

The protein belongs to the universal ribosomal protein uL5 family. In terms of assembly, part of the 50S ribosomal subunit; part of the 5S rRNA/L5/L18/L25 subcomplex. Contacts the 5S rRNA and the P site tRNA. Forms a bridge to the 30S subunit in the 70S ribosome.

This is one of the proteins that bind and probably mediate the attachment of the 5S RNA into the large ribosomal subunit, where it forms part of the central protuberance. In the 70S ribosome it contacts protein S13 of the 30S subunit (bridge B1b), connecting the 2 subunits; this bridge is implicated in subunit movement. Contacts the P site tRNA; the 5S rRNA and some of its associated proteins might help stabilize positioning of ribosome-bound tRNAs. The chain is Large ribosomal subunit protein uL5 from Solibacter usitatus (strain Ellin6076).